We begin with the raw amino-acid sequence, 282 residues long: 4-hydroxy-3-methylbut-2-enyl diphosphate reductase (282 aa).

Cys12 is a binding site for [4Fe-4S] cluster. (2E)-4-hydroxy-3-methylbut-2-enyl diphosphate-binding residues include His40 and His72. Dimethylallyl diphosphate is bound by residues His40 and His72. His40 and His72 together coordinate isopentenyl diphosphate. Cys94 contributes to the [4Fe-4S] cluster binding site. (2E)-4-hydroxy-3-methylbut-2-enyl diphosphate is bound at residue His122. Dimethylallyl diphosphate is bound at residue His122. Residue His122 coordinates isopentenyl diphosphate. Catalysis depends on Glu124, which acts as the Proton donor. Thr160 lines the (2E)-4-hydroxy-3-methylbut-2-enyl diphosphate pocket. [4Fe-4S] cluster is bound at residue Cys188. Residues Ser216, Asn218, and Ser260 each coordinate (2E)-4-hydroxy-3-methylbut-2-enyl diphosphate. 3 residues coordinate dimethylallyl diphosphate: Ser216, Asn218, and Ser260. Residues Ser216, Asn218, and Ser260 each contribute to the isopentenyl diphosphate site.

It belongs to the IspH family. Requires [4Fe-4S] cluster as cofactor.

The catalysed reaction is isopentenyl diphosphate + 2 oxidized [2Fe-2S]-[ferredoxin] + H2O = (2E)-4-hydroxy-3-methylbut-2-enyl diphosphate + 2 reduced [2Fe-2S]-[ferredoxin] + 2 H(+). It carries out the reaction dimethylallyl diphosphate + 2 oxidized [2Fe-2S]-[ferredoxin] + H2O = (2E)-4-hydroxy-3-methylbut-2-enyl diphosphate + 2 reduced [2Fe-2S]-[ferredoxin] + 2 H(+). The protein operates within isoprenoid biosynthesis; dimethylallyl diphosphate biosynthesis; dimethylallyl diphosphate from (2E)-4-hydroxy-3-methylbutenyl diphosphate: step 1/1. It participates in isoprenoid biosynthesis; isopentenyl diphosphate biosynthesis via DXP pathway; isopentenyl diphosphate from 1-deoxy-D-xylulose 5-phosphate: step 6/6. Catalyzes the conversion of 1-hydroxy-2-methyl-2-(E)-butenyl 4-diphosphate (HMBPP) into a mixture of isopentenyl diphosphate (IPP) and dimethylallyl diphosphate (DMAPP). Acts in the terminal step of the DOXP/MEP pathway for isoprenoid precursor biosynthesis. This is 4-hydroxy-3-methylbut-2-enyl diphosphate reductase from Geotalea uraniireducens (strain Rf4) (Geobacter uraniireducens).